The primary structure comprises 896 residues: DNA double-strand break repair Rad50 ATPase (896 aa).

Residues 32 to 38 (NGAGKSS) and Gln137 contribute to the ATP site. Coiled coils occupy residues 200 to 274 (RRYQ…KLQE), 412 to 505 (EEIR…LISM), 580 to 611 (IGDI…ESEF), 636 to 669 (IKLA…IQKR), and 702 to 731 (RSKV…RMKK). Residues 411-507 (YEEIRRDIDE…KKRQLISMES (97 aa)) form the Zinc-hook domain. Cys455 and Cys458 together coordinate Zn(2+).

It belongs to the SMC family. RAD50 subfamily. As to quaternary structure, homodimer. Forms a heterotetramer composed of two Mre11 subunits and two Rad50 subunits. Zn(2+) is required as a cofactor.

Its function is as follows. Part of the Rad50/Mre11 complex, which is involved in the early steps of DNA double-strand break (DSB) repair. The complex may facilitate opening of the processed DNA ends to aid in the recruitment of HerA and NurA. Rad50 controls the balance between DNA end bridging and DNA resection via ATP-dependent structural rearrangements of the Rad50/Mre11 complex. The sequence is that of DNA double-strand break repair Rad50 ATPase from Thermoplasma acidophilum (strain ATCC 25905 / DSM 1728 / JCM 9062 / NBRC 15155 / AMRC-C165).